A 932-amino-acid polypeptide reads, in one-letter code: Serotype-specific antigen 1 (932 aa).

The first 24 residues, 1–24 (MYKIKHSFNKTLIAISISSFLSIA), serve as a signal peptide directing secretion. One can recognise a Peptidase S8 domain in the interval 25–407 (YATESIENPQ…WGLINLKKAV (383 aa)). Catalysis depends on charge relay system residues Asp58, His116, and Ser351. Positions 669–932 (HTPLQTTVWA…PIWLESKCWL (264 aa)) constitute an Autotransporter domain.

Belongs to the peptidase S8 family.

The protein resides in the cell outer membrane. In Mannheimia haemolytica (Pasteurella haemolytica), this protein is Serotype-specific antigen 1 (ssa1).